The sequence spans 904 residues: Alanine--tRNA ligase (904 aa).

Zn(2+)-binding residues include His594, His598, Cys695, and His699.

Belongs to the class-II aminoacyl-tRNA synthetase family. Zn(2+) is required as a cofactor.

It localises to the cytoplasm. The enzyme catalyses tRNA(Ala) + L-alanine + ATP = L-alanyl-tRNA(Ala) + AMP + diphosphate. Catalyzes the attachment of alanine to tRNA(Ala) in a two-step reaction: alanine is first activated by ATP to form Ala-AMP and then transferred to the acceptor end of tRNA(Ala). Also edits incorrectly charged Ser-tRNA(Ala) and Gly-tRNA(Ala) via its editing domain. The polypeptide is Alanine--tRNA ligase (Anaeromyxobacter sp. (strain Fw109-5)).